The sequence spans 446 residues: D(1A) dopamine receptor (446 aa).

At 1–23 (MRTLNTSTMEGTGLVAERDFSFR) the chain is on the extracellular side. N-linked (GlcNAc...) asparagine glycosylation is present at Asn5. A helical transmembrane segment spans residues 24–49 (ILTACFLSLLILSTLLGNTLVCAAVI). Topologically, residues 50-60 (RFRHLRSKVTN) are cytoplasmic. The helical transmembrane segment at 61 to 87 (FFVISLAVSDLLVAVLVMPWKAVAEIA) threads the bilayer. Topologically, residues 88–96 (GFWPFGSFC) are extracellular. Cys96 and Cys186 are disulfide-bonded. A helical transmembrane segment spans residues 97–119 (NIWVAFDIMCSTASILNLCVISV). At 120-138 (DRYWAISSPFRYERKMTPK) the chain is on the cytoplasmic side. Residues 139–163 (AAFILISVAWTLSVLISFIPVQLSW) form a helical membrane-spanning segment. Residues 164 to 192 (HKAKPTGPSEGNATSLGKTINNCDSSLSR) lie on the Extracellular side of the membrane. Asn175 carries N-linked (GlcNAc...) asparagine glycosylation. The helical transmembrane segment at 193-218 (TYAISSSLISFYIPVAIMIVTYTRIY) threads the bilayer. At 219-272 (RIAQKQIRRISALERAAVHAKNCQTTTGNGNPMECSQPESSFKMSFKRETKVLK) the chain is on the cytoplasmic side. The helical transmembrane segment at 273–299 (TLSVIMGVFVCCWLPFFILNCMVPFCG) threads the bilayer. The Extracellular segment spans residues 300–312 (SGETKPFCIDSIT). The helical transmembrane segment at 313–337 (FDVFVWFGWANSSLNPIIYAFNADF) threads the bilayer. At 338 to 446 (RKAFSTLLGC…PITQNGQHPT (109 aa)) the chain is on the cytoplasmic side. 2 S-palmitoyl cysteine lipidation sites follow: Cys347 and Cys351.

It belongs to the G-protein coupled receptor 1 family. In terms of assembly, interacts with DNAJC14 via its C-terminus. Interacts with DRD2. Interacts with DORIP1.

It localises to the cell membrane. The protein resides in the endoplasmic reticulum membrane. Its subcellular location is the cell projection. It is found in the cilium membrane. The protein localises to the dendrite. It localises to the dendritic spine. Its function is as follows. Dopamine receptor whose activity is mediated by G proteins which activate adenylyl cyclase. This Bos taurus (Bovine) protein is D(1A) dopamine receptor (DRD1).